Here is a 33-residue protein sequence, read N- to C-terminus: QLGPQDLPYLTADLSKKQGPWLEEEEAYGWMDF.

2 positions are modified to pyrrolidone carboxylic acid: Gln-1 and Gln-18. Tyr-28 carries the sulfotyrosine modification. Phe-33 bears the Phenylalanine amide mark.

It belongs to the gastrin/cholecystokinin family.

The protein resides in the secreted. Its function is as follows. Gastrin stimulates the stomach mucosa to produce and secrete hydrochloric acid and the pancreas to secrete its digestive enzymes. It also stimulates smooth muscle contraction and increases blood circulation and water secretion in the stomach and intestine. The protein is Gastrin (GAST) of Didelphis virginiana (North American opossum).